Here is a 369-residue protein sequence, read N- to C-terminus: Phosphoserine aminotransferase (369 aa).

Arg-42 provides a ligand contact to L-glutamate. Positions 101, 152, 176, and 199 each coordinate pyridoxal 5'-phosphate. Lys-200 carries the post-translational modification N6-(pyridoxal phosphate)lysine. Position 241 to 242 (241 to 242) interacts with pyridoxal 5'-phosphate; that stretch reads NT.

This sequence belongs to the class-V pyridoxal-phosphate-dependent aminotransferase family. SerC subfamily. In terms of assembly, homodimer. Pyridoxal 5'-phosphate serves as cofactor.

It is found in the cytoplasm. It carries out the reaction O-phospho-L-serine + 2-oxoglutarate = 3-phosphooxypyruvate + L-glutamate. The enzyme catalyses 4-(phosphooxy)-L-threonine + 2-oxoglutarate = (R)-3-hydroxy-2-oxo-4-phosphooxybutanoate + L-glutamate. The protein operates within amino-acid biosynthesis; L-serine biosynthesis; L-serine from 3-phospho-D-glycerate: step 2/3. It participates in cofactor biosynthesis; pyridoxine 5'-phosphate biosynthesis; pyridoxine 5'-phosphate from D-erythrose 4-phosphate: step 3/5. In terms of biological role, catalyzes the reversible conversion of 3-phosphohydroxypyruvate to phosphoserine and of 3-hydroxy-2-oxo-4-phosphonooxybutanoate to phosphohydroxythreonine. The chain is Phosphoserine aminotransferase from Delftia acidovorans (strain DSM 14801 / SPH-1).